The primary structure comprises 92 residues: MAKGQSLQDPFLNALRRERVPVSIYLVNGIKLQGQVESFDQFVILLKNTVSQMVYKHAISTVVPSRPFNVSNHQATNAQAGFNAQHDDGDDK.

In terms of domain architecture, Sm spans 9 to 68 (DPFLNALRRERVPVSIYLVNGIKLQGQVESFDQFVILLKNTVSQMVYKHAISTVVPSRPF).

This sequence belongs to the Hfq family. Homohexamer.

Functionally, RNA chaperone that binds small regulatory RNA (sRNAs) and mRNAs to facilitate mRNA translational regulation in response to envelope stress, environmental stress and changes in metabolite concentrations. Also binds with high specificity to tRNAs. This Shewanella halifaxensis (strain HAW-EB4) protein is RNA-binding protein Hfq.